Here is a 1058-residue protein sequence, read N- to C-terminus: Carbamoyl phosphate synthase large chain (1058 aa).

A carboxyphosphate synthetic domain region spans residues 1 to 401 (MPKRTDIQKI…SLLKACRSLE (401 aa)). Residues Arg129, Arg169, Gly175, Gly176, Arg208, Ile210, Glu215, Gly241, Ile242, His243, Gln284, and Glu298 each contribute to the ATP site. The 195-residue stretch at 133-327 (KQLMEELEQP…IAKLAAKIAV (195 aa)) folds into the ATP-grasp 1 domain. Mg(2+) is bound by residues Gln284, Glu298, and Asn300. Mn(2+) is bound by residues Gln284, Glu298, and Asn300. Residues 402–546 (IGVHHNEIPE…YSTYGWENES (145 aa)) are oligomerization domain. A carbamoyl phosphate synthetic domain region spans residues 547–929 (IRSDKESVLV…ALYKAFEASY (383 aa)). The ATP-grasp 2 domain occupies 671–861 (EQALKELDIP…MAQVATKLIL (191 aa)). 10 residues coordinate ATP: Arg707, Ser746, Ile748, Glu752, Gly777, Val778, His779, Ser780, Gln820, and Glu832. The Mg(2+) site is built by Gln820, Glu832, and Asn834. Positions 820, 832, and 834 each coordinate Mn(2+). In terms of domain architecture, MGS-like spans 930–1058 (LHLPTFGNVV…ESRSFVTEAI (129 aa)). The allosteric domain stretch occupies residues 930–1058 (LHLPTFGNVV…ESRSFVTEAI (129 aa)).

The protein belongs to the CarB family. Composed of two chains; the small (or glutamine) chain promotes the hydrolysis of glutamine to ammonia, which is used by the large (or ammonia) chain to synthesize carbamoyl phosphate. Tetramer of heterodimers (alpha,beta)4. Requires Mg(2+) as cofactor. It depends on Mn(2+) as a cofactor.

It catalyses the reaction hydrogencarbonate + L-glutamine + 2 ATP + H2O = carbamoyl phosphate + L-glutamate + 2 ADP + phosphate + 2 H(+). The catalysed reaction is hydrogencarbonate + NH4(+) + 2 ATP = carbamoyl phosphate + 2 ADP + phosphate + 2 H(+). It functions in the pathway amino-acid biosynthesis; L-arginine biosynthesis; carbamoyl phosphate from bicarbonate: step 1/1. It participates in pyrimidine metabolism; UMP biosynthesis via de novo pathway; (S)-dihydroorotate from bicarbonate: step 1/3. Its function is as follows. Large subunit of the glutamine-dependent carbamoyl phosphate synthetase (CPSase). CPSase catalyzes the formation of carbamoyl phosphate from the ammonia moiety of glutamine, carbonate, and phosphate donated by ATP, constituting the first step of 2 biosynthetic pathways, one leading to arginine and/or urea and the other to pyrimidine nucleotides. The large subunit (synthetase) binds the substrates ammonia (free or transferred from glutamine from the small subunit), hydrogencarbonate and ATP and carries out an ATP-coupled ligase reaction, activating hydrogencarbonate by forming carboxy phosphate which reacts with ammonia to form carbamoyl phosphate. The sequence is that of Carbamoyl phosphate synthase large chain from Streptococcus pneumoniae (strain Hungary19A-6).